The chain runs to 252 residues: 4-hydroxy-tetrahydrodipicolinate reductase (252 aa).

NAD(+)-binding positions include Gly-8–Met-13, Cys-85–Thr-87, and Ser-109–Met-112. His-142 (proton donor/acceptor) is an active-site residue. His-143 lines the (S)-2,3,4,5-tetrahydrodipicolinate pocket. Lys-146 functions as the Proton donor in the catalytic mechanism. Gly-152 to Thr-153 lines the (S)-2,3,4,5-tetrahydrodipicolinate pocket.

The protein belongs to the DapB family.

It is found in the cytoplasm. The catalysed reaction is (S)-2,3,4,5-tetrahydrodipicolinate + NAD(+) + H2O = (2S,4S)-4-hydroxy-2,3,4,5-tetrahydrodipicolinate + NADH + H(+). It catalyses the reaction (S)-2,3,4,5-tetrahydrodipicolinate + NADP(+) + H2O = (2S,4S)-4-hydroxy-2,3,4,5-tetrahydrodipicolinate + NADPH + H(+). The protein operates within amino-acid biosynthesis; L-lysine biosynthesis via DAP pathway; (S)-tetrahydrodipicolinate from L-aspartate: step 4/4. Functionally, catalyzes the conversion of 4-hydroxy-tetrahydrodipicolinate (HTPA) to tetrahydrodipicolinate. The protein is 4-hydroxy-tetrahydrodipicolinate reductase of Clostridium novyi (strain NT).